A 360-amino-acid chain; its full sequence is Phospho-N-acetylmuramoyl-pentapeptide-transferase (360 aa).

10 helical membrane-spanning segments follow: residues 26-46, 72-92, 94-114, 132-152, 168-188, 199-219, 236-256, 263-283, 288-308, and 338-358; these read AIVS…RMIA, PTMG…LWAY, SNPY…IGFV, WKYF…YLAG, VMPQ…VGTG, GLAI…AWAT, AGEL…FLWF, VFMG…IAVL, FLLV…ILQV, and VIVR…ATLK.

It belongs to the glycosyltransferase 4 family. MraY subfamily. Requires Mg(2+) as cofactor.

It is found in the cell inner membrane. The enzyme catalyses UDP-N-acetyl-alpha-D-muramoyl-L-alanyl-gamma-D-glutamyl-meso-2,6-diaminopimeloyl-D-alanyl-D-alanine + di-trans,octa-cis-undecaprenyl phosphate = di-trans,octa-cis-undecaprenyl diphospho-N-acetyl-alpha-D-muramoyl-L-alanyl-D-glutamyl-meso-2,6-diaminopimeloyl-D-alanyl-D-alanine + UMP. Its pathway is cell wall biogenesis; peptidoglycan biosynthesis. Functionally, catalyzes the initial step of the lipid cycle reactions in the biosynthesis of the cell wall peptidoglycan: transfers peptidoglycan precursor phospho-MurNAc-pentapeptide from UDP-MurNAc-pentapeptide onto the lipid carrier undecaprenyl phosphate, yielding undecaprenyl-pyrophosphoryl-MurNAc-pentapeptide, known as lipid I. The sequence is that of Phospho-N-acetylmuramoyl-pentapeptide-transferase from Citrobacter koseri (strain ATCC BAA-895 / CDC 4225-83 / SGSC4696).